The sequence spans 161 residues: Small ribosomal subunit protein eS6 (161 aa).

Residues 119 to 161 (VLLGEEEPEDADDDGDSDVDADEATDTDAGSEEDNDDDIADAE) are disordered. Residues 122-161 (GEEEPEDADDDGDSDVDADEATDTDAGSEEDNDDDIADAE) are compositionally biased toward acidic residues.

This sequence belongs to the eukaryotic ribosomal protein eS6 family.

This is Small ribosomal subunit protein eS6 from Haloquadratum walsbyi (strain DSM 16790 / HBSQ001).